The following is a 206-amino-acid chain: Probable GTP-binding protein EngB (206 aa).

The region spanning 25-198 (SRAEVAFAGR…AVRIEGWLAP (174 aa)) is the EngB-type G domain. Mg(2+) is bound by residues Ser40 and Thr62.

Belongs to the TRAFAC class TrmE-Era-EngA-EngB-Septin-like GTPase superfamily. EngB GTPase family. It depends on Mg(2+) as a cofactor.

In terms of biological role, necessary for normal cell division and for the maintenance of normal septation. This is Probable GTP-binding protein EngB from Thiobacillus denitrificans (strain ATCC 25259 / T1).